A 495-amino-acid polypeptide reads, in one-letter code: Glycerol kinase (495 aa).

Residue threonine 11 participates in ADP binding. ATP contacts are provided by threonine 11, threonine 12, and serine 13. Residue threonine 11 coordinates sn-glycerol 3-phosphate. Arginine 15 is an ADP binding site. Positions 81, 82, 133, and 242 each coordinate sn-glycerol 3-phosphate. Residues arginine 81, glutamate 82, tyrosine 133, aspartate 242, and glutamine 243 each coordinate glycerol. 2 residues coordinate ADP: threonine 264 and glycine 307. ATP is bound by residues threonine 264, glycine 307, glutamine 311, and glycine 408. Glycine 408 and asparagine 412 together coordinate ADP.

It belongs to the FGGY kinase family.

The catalysed reaction is glycerol + ATP = sn-glycerol 3-phosphate + ADP + H(+). It functions in the pathway polyol metabolism; glycerol degradation via glycerol kinase pathway; sn-glycerol 3-phosphate from glycerol: step 1/1. With respect to regulation, inhibited by fructose 1,6-bisphosphate (FBP). Functionally, key enzyme in the regulation of glycerol uptake and metabolism. Catalyzes the phosphorylation of glycerol to yield sn-glycerol 3-phosphate. The protein is Glycerol kinase of Citrifermentans bemidjiense (strain ATCC BAA-1014 / DSM 16622 / JCM 12645 / Bem) (Geobacter bemidjiensis).